A 511-amino-acid polypeptide reads, in one-letter code: MKNVSRLLPLLPGIALLTGCNQKVQKDNGQNSQKPNIIYIFADDLGIGDLSCYGATKVSTPHIDRLAGQGVQFTNAYATSATSTPSRFGLLTGMYPWRQENTGIAPGNSELIIDTACVTMADMLKEAGYATGVVGKWHLGLGPKGGTDFNGHITPNAQSIGFDYEFVIPATVDRVPCVFVENGHVVGLDPNDPITVNYEHKVGDWPTGEENPELVKLKPSQGHNNTIINGIPRIGWMTGGKSALWKDEDIADIITNKAKSFIVSHKEEPFFLYMGTQDVHVPRVPHPRFAGKSGLGTRGDVILQLDWTIGEIMNTLDSLQLTDNTILIFTSDNGPVIDDGYQDQAFERLNGHTPMGIYRGGKYSAYEAGTRIPFIVRWPAKVKPNKQQALFSQIDIFASLAALLKQPLPEDAAPDSQEHLNTLLGKDYTSREYIVQQNLNNTLAIVKGQWKYIEPSDAPAIEYWTKMELGNDRHPQLYDLSADPSEKNNVAKQHPEVVRELSELLESVKTR.

Ser83 bears the 3-oxoalanine (Ser) mark.

The protein belongs to the sulfatase family. The conversion to 3-oxoalanine (also known as C-formylglycine, FGly), of a serine or cysteine residue in prokaryotes and of a cysteine residue in eukaryotes, is critical for catalytic activity.

Exosulfatase involved in the degradation of the glycosaminoglycans (GAGs) chondroitin sulfate (CS) and dermatan sulfate (DS). Catalyzes the hydrolysis of the 6-sulfate groups of the N-acetyl-D-galactosamine 6-sulfate units. GAG-specific sulfatases play a key role in the persistence of the major human gut symbiont B.thetaiotaomicron in the host gastrointestinal tract. The sequence is that of N-acetylgalactosamine-6-O-sulfatase from Bacteroides thetaiotaomicron (strain ATCC 29148 / DSM 2079 / JCM 5827 / CCUG 10774 / NCTC 10582 / VPI-5482 / E50).